A 284-amino-acid chain; its full sequence is Pseudouridine-5'-phosphate glycosidase (284 aa).

The active-site Proton donor is the E17. Residues K77 and V97 each contribute to the substrate site. D126 lines the Mn(2+) pocket. Substrate is bound at residue 128–130 (SQD). K147 acts as the Nucleophile in catalysis.

This sequence belongs to the pseudouridine-5'-phosphate glycosidase family. Homotrimer. The cofactor is Mn(2+).

The enzyme catalyses D-ribose 5-phosphate + uracil = psi-UMP + H2O. Functionally, catalyzes the reversible cleavage of pseudouridine 5'-phosphate (PsiMP) to ribose 5-phosphate and uracil. Functions biologically in the cleavage direction, as part of a pseudouridine degradation pathway. This is Pseudouridine-5'-phosphate glycosidase from Thermotoga petrophila (strain ATCC BAA-488 / DSM 13995 / JCM 10881 / RKU-1).